The primary structure comprises 335 residues: Glyceraldehyde-3-phosphate dehydrogenase (335 aa).

Residues 10 to 11, aspartate 33, lysine 77, and threonine 119 each bind NAD(+); that span reads RI. D-glyceraldehyde 3-phosphate-binding positions include 150–152, threonine 181, 210–211, and arginine 233; these read SCT and TG. Cysteine 151 acts as the Nucleophile in catalysis. Asparagine 315 serves as a coordination point for NAD(+).

This sequence belongs to the glyceraldehyde-3-phosphate dehydrogenase family. As to quaternary structure, homotetramer.

The protein resides in the cytoplasm. The enzyme catalyses D-glyceraldehyde 3-phosphate + phosphate + NAD(+) = (2R)-3-phospho-glyceroyl phosphate + NADH + H(+). It participates in carbohydrate degradation; glycolysis; pyruvate from D-glyceraldehyde 3-phosphate: step 1/5. In terms of biological role, catalyzes the oxidative phosphorylation of glyceraldehyde 3-phosphate (G3P) to 1,3-bisphosphoglycerate (BPG) using the cofactor NAD. The first reaction step involves the formation of a hemiacetal intermediate between G3P and a cysteine residue, and this hemiacetal intermediate is then oxidized to a thioester, with concomitant reduction of NAD to NADH. The reduced NADH is then exchanged with the second NAD, and the thioester is attacked by a nucleophilic inorganic phosphate to produce BPG. This chain is Glyceraldehyde-3-phosphate dehydrogenase (gap), found in Chlamydia muridarum (strain MoPn / Nigg).